Reading from the N-terminus, the 97-residue chain is UPF0298 protein MGAS9429_Spy0329 (97 aa).

This sequence belongs to the UPF0298 family.

It is found in the cytoplasm. The polypeptide is UPF0298 protein MGAS9429_Spy0329 (Streptococcus pyogenes serotype M12 (strain MGAS9429)).